The primary structure comprises 266 residues: Translation initiation factor 2 subunit alpha (266 aa).

In terms of domain architecture, S1 motif spans 10–81; sequence GELVVGKIDE…SAQQIDLSIK (72 aa). Residues 233–266 are disordered; it reads AEDALEESADRAAKVVEQHGGSGQFHRERSEDDE. 2 stretches are compositionally biased toward basic and acidic residues: residues 240–249 and 257–266; these read SADRAAKVVE and FHRERSEDDE.

This sequence belongs to the eIF-2-alpha family. In terms of assembly, heterotrimer composed of an alpha, a beta and a gamma chain.

Functionally, eIF-2 functions in the early steps of protein synthesis by forming a ternary complex with GTP and initiator tRNA. This is Translation initiation factor 2 subunit alpha from Haloarcula marismortui (strain ATCC 43049 / DSM 3752 / JCM 8966 / VKM B-1809) (Halobacterium marismortui).